The chain runs to 119 residues: UPF0102 protein PM0647 (119 aa).

This sequence belongs to the UPF0102 family.

This is UPF0102 protein PM0647 from Pasteurella multocida (strain Pm70).